The chain runs to 576 residues: Colicin-E7 (576 aa).

Disordered stretches follow at residues 1–75 (MSGG…GGGS), 421–478 (SSAL…PVPD), and 506–557 (DPEL…GVYD). Residues 19–35 (NINGGPTGLGGNGGASD) are compositionally biased toward gly residues. Positions 36 to 45 (GSGWSSENNP) are enriched in low complexity. Residues 46 to 75 (WGGGSGSGVHWGGGSGHGNGGGNSNSGGGS) are compositionally biased toward gly residues. Composition is skewed to basic and acidic residues over residues 424–447 (LERR…ESKR) and 535–548 (SGKR…HEKP). Zn(2+)-binding residues include histidine 544, histidine 569, and histidine 573.

It belongs to the colicin/pyosin nuclease family.

In terms of biological role, this plasmid-coded bactericidal protein is an endonuclease active on both single- and double-stranded DNA but with undefined specificity. Functionally, colicins are polypeptide toxins produced by and active against E.coli and closely related bacteria. This is Colicin-E7 (colE7) from Escherichia coli.